Reading from the N-terminus, the 427-residue chain is Enolase (427 aa).

Residue glutamine 163 coordinates (2R)-2-phosphoglycerate. Glutamate 205 serves as the catalytic Proton donor. Residues aspartate 242, glutamate 285, and aspartate 312 each contribute to the Mg(2+) site. (2R)-2-phosphoglycerate-binding residues include lysine 337, arginine 366, serine 367, and lysine 388. Lysine 337 (proton acceptor) is an active-site residue.

Belongs to the enolase family. Mg(2+) serves as cofactor.

It is found in the cytoplasm. Its subcellular location is the secreted. The protein localises to the cell surface. The enzyme catalyses (2R)-2-phosphoglycerate = phosphoenolpyruvate + H2O. It functions in the pathway carbohydrate degradation; glycolysis; pyruvate from D-glyceraldehyde 3-phosphate: step 4/5. In terms of biological role, catalyzes the reversible conversion of 2-phosphoglycerate (2-PG) into phosphoenolpyruvate (PEP). It is essential for the degradation of carbohydrates via glycolysis. This chain is Enolase, found in Laribacter hongkongensis (strain HLHK9).